Here is a 239-residue protein sequence, read N- to C-terminus: Fatty acid metabolism regulator protein (239 aa).

Positions 6–74 constitute an HTH gntR-type domain; that stretch reads QSPAGFAEEY…HGKPTKVNNF (69 aa). The segment at residues 34 to 53 is a DNA-binding region (H-T-H motif); that stretch reads ERELSELIGVTRTTLREVLQ.

As to quaternary structure, homodimer.

It is found in the cytoplasm. In terms of biological role, multifunctional regulator of fatty acid metabolism. In Enterobacter sp. (strain 638), this protein is Fatty acid metabolism regulator protein.